A 436-amino-acid chain; its full sequence is Eukaryotic translation initiation factor 5 (436 aa).

27–34 contacts GTP; sequence GKGNGIKT. Positions 177-203 are disordered; that stretch reads NSDKGSSNDDDDDDWEPEPVEPNGMLS. The span at 184 to 195 shows a compositional bias: acidic residues; sequence NDDDDDDWEPEP. The 164-residue stretch at 216-379 folds into the W2 domain; the sequence is EKSEEQRLDM…KEAEEETEEE (164 aa). A compositionally biased stretch (basic and acidic residues) spans 396-408; that stretch reads LRQQKEKAAREAQ. The interval 396–436 is disordered; sequence LRQQKEKAAREAQQKSAKATNGNAAAASGANDEEDLDIDDI. A compositionally biased stretch (low complexity) spans 409–425; sequence QKSAKATNGNAAAASGA. Acidic residues predominate over residues 426-436; that stretch reads NDEEDLDIDDI.

The protein belongs to the eIF-2-beta/eIF-5 family.

Functionally, catalyzes the hydrolysis of GTP bound to the 40S ribosomal initiation complex (40S.mRNA.Met-tRNA[F].eIF-2.GTP) with the subsequent joining of a 60S ribosomal subunit resulting in the release of eIF-2 and the guanine nucleotide. The subsequent joining of a 60S ribosomal subunit results in the formation of a functional 80S initiation complex (80S.mRNA.Met-tRNA[F]). The sequence is that of Eukaryotic translation initiation factor 5 from Caenorhabditis elegans.